Here is a 424-residue protein sequence, read N- to C-terminus: Spermatogenesis-associated protein 2-like protein (424 aa).

2 disordered regions span residues 233 to 258 and 273 to 300; these read EDEG…AELA and TGGR…EEGL. Ser-327 is modified (phosphoserine).

It belongs to the SPATA2 family.

In Homo sapiens (Human), this protein is Spermatogenesis-associated protein 2-like protein.